Consider the following 857-residue polypeptide: Leucine--tRNA ligase (857 aa).

The 'HIGH' region signature appears at 42-52 (PYPSGNLHMGH). The short motif at 615–619 (KMSKS) is the 'KMSKS' region element. Residue Lys618 participates in ATP binding.

The protein belongs to the class-I aminoacyl-tRNA synthetase family.

It is found in the cytoplasm. It carries out the reaction tRNA(Leu) + L-leucine + ATP = L-leucyl-tRNA(Leu) + AMP + diphosphate. In Thermosynechococcus vestitus (strain NIES-2133 / IAM M-273 / BP-1), this protein is Leucine--tRNA ligase.